The sequence spans 199 residues: Ribonuclease P protein subunit p25 (199 aa).

Basic and acidic residues predominate over residues Met1–Glu11. Disordered regions lie at residues Met1–Leu31 and Pro146–Ala199. The residue at position 172 (Ser172) is a Phosphoserine. Positions Pro190–Ala199 are enriched in acidic residues.

Belongs to the histone-like Alba family. Component of nuclear RNase P and RNase MRP ribonucleoproteins. RNase P consists of a catalytic RNA moiety and 10 different protein chains; POP1, POP4, POP5, POP7, RPP14, RPP21, RPP25, RPP30, RPP38 and RPP40. Within the RNase P complex, POP1, POP7 and RPP25 form the 'finger' subcomplex, POP5, RPP14, RPP40 and homodimeric RPP30 form the 'palm' subcomplex, and RPP21, POP4 and RPP38 form the 'wrist' subcomplex. All subunits of the RNase P complex interact with the catalytic RNA. Several subunits of RNase P are also part of the RNase MRP complex. RNase MRP consists of a catalytic RNA moiety and about 8 protein subunits; POP1, POP7, RPP25, RPP30, RPP38, RPP40 and possibly also POP4 and POP5. POP7 forms a heterodimer with RPP25 that binds to the P3 stem loop of the catalytic RNA.

It is found in the nucleus. Its subcellular location is the nucleolus. Functionally, component of ribonuclease P, a ribonucleoprotein complex that generates mature tRNA molecules by cleaving their 5'-ends. Also a component of the MRP ribonuclease complex, which cleaves pre-rRNA sequences. The chain is Ribonuclease P protein subunit p25 (Rpp25) from Rattus norvegicus (Rat).